The chain runs to 480 residues: Amino acid permease 5 (480 aa).

A disordered region spans residues 1–25 (MVVQNVQDLDVLPKHSSDSFDDDGR). Residues 1 to 31 (MVVQNVQDLDVLPKHSSDSFDDDGRPKRTGT) are Cytoplasmic-facing. Basic and acidic residues predominate over residues 11 to 25 (VLPKHSSDSFDDDGR). 2 helical membrane passes run 32-52 (VWTA…LSLA) and 53-73 (WAVA…FSFV). Residues 74–120 (TFYTSTLLCSCYRSGDSVTGKRNYTYMDAIHSNLGGIKVKVCGVVQY) are Cytoplasmic-facing. A helical membrane pass occupies residues 121 to 141 (VNLFGTAIGYTIASAISLVAI). The Extracellular segment spans residues 142–157 (QRTSCQQMNGPNDPCH). The helical transmembrane segment at 158-178 (VNGNVYMIAFGIVQIIFSQIP) threads the bilayer. Topologically, residues 179 to 182 (DFDQ) are cytoplasmic. A helical transmembrane segment spans residues 183-203 (LWWLSIVAAVMSFAYSAIGLG). Residues 204 to 241 (LGVSKVVENKEIKGSLTGVTVGTVTLSGTVTSSQKIWR) are Extracellular-facing. The chain crosses the membrane as a helical span at residues 242-262 (TFQSLGNIAFAYSYSMILIEI). Over 263-280 (QDTVKSPPAEVNTMRKAT) the chain is Cytoplasmic. Residues 281 to 301 (FVSVAVTTVFYMLCGCVGYAA) traverse the membrane as a helical segment. The Extracellular segment spans residues 302–328 (FGDNAPGNLLAHGGFRNPYWLLDIANL). The helical transmembrane segment at 329-349 (AIVIHLVGAYQVYCQPLFAFV) threads the bilayer. The Cytoplasmic segment spans residues 350–383 (EKEASRRFPESEFVTKEIKIQLFPGKPFNLNLFR). The helical transmembrane segment at 384 to 404 (LVWRTFFVMTTTLISMLMPFF) threads the bilayer. Over 405–406 (ND) the chain is Extracellular. A helical membrane pass occupies residues 407–427 (VVGLLGAIGFWPLTVYFPVEM). Residues 428 to 445 (YIAQKNVPRWGTKWVCLQ) are Cytoplasmic-facing. A helical transmembrane segment spans residues 446 to 466 (VLSVTCLFVSVAAAAGSVIGI). At 467 to 480 (VSDLKVYKPFQSEF) the chain is on the extracellular side.

This sequence belongs to the amino acid/polyamine transporter 2 family. Amino acid/auxin permease (AAAP) (TC 2.A.18.2) subfamily. Expressed in leaves, stems, roots, siliques and flowers.

It is found in the cell membrane. Inhibited by 2,4-dinitrophenol. Amino acid-proton symporter. Stereospecific transporter with a broad specificity for glutamate and both neutral and basic amino acids. Reduced affinities for asparagine and valine. High affinity transport of the cationic amino acids arginine and lysine, but not of histidine. The chain is Amino acid permease 5 (AAP5) from Arabidopsis thaliana (Mouse-ear cress).